We begin with the raw amino-acid sequence, 498 residues long: ATP synthase subunit beta, chloroplastic (498 aa).

172–179 (GGAGVGKT) contacts ATP.

The protein belongs to the ATPase alpha/beta chains family. F-type ATPases have 2 components, CF(1) - the catalytic core - and CF(0) - the membrane proton channel. CF(1) has five subunits: alpha(3), beta(3), gamma(1), delta(1), epsilon(1). CF(0) has four main subunits: a(1), b(1), b'(1) and c(9-12).

It localises to the plastid. The protein resides in the chloroplast thylakoid membrane. The catalysed reaction is ATP + H2O + 4 H(+)(in) = ADP + phosphate + 5 H(+)(out). Functionally, produces ATP from ADP in the presence of a proton gradient across the membrane. The catalytic sites are hosted primarily by the beta subunits. This Gossypium hirsutum (Upland cotton) protein is ATP synthase subunit beta, chloroplastic.